Reading from the N-terminus, the 248-residue chain is MYKLVLIRHGESTWNKENRFTGWVDVDLTEQGRNEAYQAGELLKEAGYTFDIAYTSVLKRAIRTLWHVQDKMDLMYLPVVHSWRLNERHYGALSGLNKAETAAKFGDEQVLVWRRSYDTPPPALEPTDERAPFNDPRYAKVPREQLPLTECLKDTVARVLPLWNESIAPAVRAGKQVLIAAHGNSLRALIKYLDGISDSDIVGLNIPNGVPLVYELDENLKPIKHYYLGDQEAIAQAQAAVAKQGKAG.

Substrate-binding positions include 8–15, 21–22, Arg-60, 87–90, Lys-98, 114–115, and 183–184; these read RHGESTWN, TG, ERHY, RR, and GN. The active-site Tele-phosphohistidine intermediate is His-9. The active-site Proton donor/acceptor is Glu-87.

Belongs to the phosphoglycerate mutase family. BPG-dependent PGAM subfamily. As to quaternary structure, homodimer.

It carries out the reaction (2R)-2-phosphoglycerate = (2R)-3-phosphoglycerate. It functions in the pathway carbohydrate degradation; glycolysis; pyruvate from D-glyceraldehyde 3-phosphate: step 3/5. In terms of biological role, catalyzes the interconversion of 2-phosphoglycerate and 3-phosphoglycerate. This Burkholderia cenocepacia (strain ATCC BAA-245 / DSM 16553 / LMG 16656 / NCTC 13227 / J2315 / CF5610) (Burkholderia cepacia (strain J2315)) protein is 2,3-bisphosphoglycerate-dependent phosphoglycerate mutase.